Reading from the N-terminus, the 508-residue chain is BTB/POZ domain-containing protein At3g03510 (508 aa).

The BTB domain occupies 11 to 77 (QDLDLYVKGV…CYGYKIELSA (67 aa)). The region spanning 156–414 (TRLLQDLITL…MQVLFVSQMQ (259 aa)) is the NPH3 domain. Position 355 is a phosphotyrosine (Tyr-355).

The protein belongs to the NPH3 family.

It functions in the pathway protein modification; protein ubiquitination. Functionally, may act as a substrate-specific adapter of an E3 ubiquitin-protein ligase complex (CUL3-RBX1-BTB) which mediates the ubiquitination and subsequent proteasomal degradation of target proteins. The sequence is that of BTB/POZ domain-containing protein At3g03510 from Arabidopsis thaliana (Mouse-ear cress).